The primary structure comprises 66 residues: Large ribosomal subunit protein uL29 (66 aa).

Belongs to the universal ribosomal protein uL29 family.

The chain is Large ribosomal subunit protein uL29 from Pseudothermotoga lettingae (strain ATCC BAA-301 / DSM 14385 / NBRC 107922 / TMO) (Thermotoga lettingae).